A 72-amino-acid chain; its full sequence is Translation initiation factor IF-1 (72 aa).

The 72-residue stretch at 1-72 (MAKEDNIEMQ…SKGRIVFRSR (72 aa)) folds into the S1-like domain.

Belongs to the IF-1 family. As to quaternary structure, component of the 30S ribosomal translation pre-initiation complex which assembles on the 30S ribosome in the order IF-2 and IF-3, IF-1 and N-formylmethionyl-tRNA(fMet); mRNA recruitment can occur at any time during PIC assembly.

The protein localises to the cytoplasm. One of the essential components for the initiation of protein synthesis. Stabilizes the binding of IF-2 and IF-3 on the 30S subunit to which N-formylmethionyl-tRNA(fMet) subsequently binds. Helps modulate mRNA selection, yielding the 30S pre-initiation complex (PIC). Upon addition of the 50S ribosomal subunit IF-1, IF-2 and IF-3 are released leaving the mature 70S translation initiation complex. The chain is Translation initiation factor IF-1 from Shewanella pealeana (strain ATCC 700345 / ANG-SQ1).